The sequence spans 129 residues: Small ribosomal subunit protein uS11 (129 aa).

Belongs to the universal ribosomal protein uS11 family. In terms of assembly, part of the 30S ribosomal subunit. Interacts with proteins S7 and S18. Binds to IF-3.

Its function is as follows. Located on the platform of the 30S subunit, it bridges several disparate RNA helices of the 16S rRNA. Forms part of the Shine-Dalgarno cleft in the 70S ribosome. The protein is Small ribosomal subunit protein uS11 of Xanthobacter autotrophicus (strain ATCC BAA-1158 / Py2).